The following is a 342-amino-acid chain: Outer spore wall protein RRT8 (342 aa).

Topologically, residues methionine 1–histidine 109 are cytoplasmic. A helical transmembrane segment spans residues isoleucine 110–valine 130. Position 131 (threonine 131) is a topological domain, extracellular. The chain crosses the membrane as a helical span at residues leucine 132–valine 152. Residues histidine 153 to lysine 240 are Cytoplasmic-facing. The helical transmembrane segment at valine 241–alanine 261 threads the bilayer. Residues asparagine 262 to phenylalanine 299 are Extracellular-facing. The chain crosses the membrane as a helical span at residues isoleucine 300 to isoleucine 320. Residues serine 321–glutamate 342 lie on the Cytoplasmic side of the membrane.

Belongs to the LDS family.

It localises to the prospore membrane. It is found in the lipid droplet. Its subcellular location is the spore wall. Its function is as follows. Involved in spore wall assembly. May be involved in the modulation of rDNA transcription. The polypeptide is Outer spore wall protein RRT8 (Saccharomyces cerevisiae (strain ATCC 204508 / S288c) (Baker's yeast)).